The chain runs to 343 residues: Thromboxane A2 receptor (343 aa).

At 1-29 (MWPNASSLGPCFRPMNITLEERRLIASPW) the chain is on the extracellular side. N-linked (GlcNAc...) asparagine glycosylation is found at N4 and N16. The chain crosses the membrane as a helical span at residues 30 to 52 (FAASFCLVGLASNLLALSVLMGA). The Cytoplasmic portion of the chain corresponds to 53–66 (RQGSSQSRSSFLTF). The helical transmembrane segment at 67–87 (LCGLVLTDFMGLLVTGAIVVT) threads the bilayer. Over 88–106 (QHFVLFEWQAVDPGCSLCH) the chain is Extracellular. A disulfide bridge connects residues C105 and C183. A helical transmembrane segment spans residues 107–128 (FMGVIMVFFGLCPLLLGAAMAS). At 129 to 149 (ERFLGITRPFSRPATASQRRA) the chain is on the cytoplasmic side. Residues 150–172 (WTTVGLVWASALALGLLPLLGVG) form a helical membrane-spanning segment. The Extracellular segment spans residues 173–193 (HYTVQYPGSWCFLTLGTDPGD). The helical transmembrane segment at 194–219 (VAFGLLFALLGSISVGMSFLLNTISV) threads the bilayer. At 220-246 (ATLCHVYHGQATAQQRPRDCEVEMMVQ) the chain is on the cytoplasmic side. Residues 247 to 270 (LMGIMVVASICWMPLLVFIAQTVL) form a helical membrane-spanning segment. At 271–289 (QSPPAMSPTGQLSRLTERQ) the chain is on the extracellular side. The chain crosses the membrane as a helical span at residues 290–311 (LLIYLRVATWNQILDPWVYILF). Residues 312-343 (RRAVIQRFYPRLSTRSRSLSLQPQLTRRSTIH) lie on the Cytoplasmic side of the membrane. S329 and S331 each carry phosphoserine.

This sequence belongs to the G-protein coupled receptor 1 family. As to quaternary structure, interacts with RPGRIP1L. Interacts with RACK1; the interaction regulates TBXA2R cell surface expression.

The protein localises to the cell membrane. In terms of biological role, receptor for thromboxane A2 (TXA2), a potent stimulator of platelet aggregation. The activity of this receptor is mediated by a G-protein that activates a phosphatidylinositol-calcium second messenger system. In the kidney, the binding of TXA2 to glomerular TP receptors causes intense vasoconstriction. Activates phospholipase C and adenylyl cyclase. The protein is Thromboxane A2 receptor (TBXA2R) of Bos taurus (Bovine).